Consider the following 93-residue polypeptide: Ribonuclease P protein component 1 (93 aa).

It belongs to the eukaryotic/archaeal RNase P protein component 1 family. In terms of assembly, consists of a catalytic RNA component and at least 4-5 protein subunits.

It is found in the cytoplasm. It catalyses the reaction Endonucleolytic cleavage of RNA, removing 5'-extranucleotides from tRNA precursor.. Functionally, part of ribonuclease P, a protein complex that generates mature tRNA molecules by cleaving their 5'-ends. This is Ribonuclease P protein component 1 from Methanothermobacter thermautotrophicus (strain ATCC 29096 / DSM 1053 / JCM 10044 / NBRC 100330 / Delta H) (Methanobacterium thermoautotrophicum).